Here is a 489-residue protein sequence, read N- to C-terminus: MASEGDPGVGSGDSDFVVVANRLPIDMERLPDGSTSFKRSPGGLVTALEPLLRKRHGAWIGWAGIPDSAEDPIEDDGLQLYPVSLSADDVADYYEGFSNATLWPLYHDLIVKPIYHRKWWDRYVEVNRRFAEATARAAAEGATVWVQDYQLQLVPKMLRMLRPDLTIGFFLHIPFPPVELFMQMPWRTEIIEGLLGADLVGFHLPGGAQNFLYLARRLTGANTSRATVGVRSRFGEVQVGFRTVKVGAFPISIDSDELDGKARNRAVRQRAREIRNELGNPRKILLGVDRLDYTKGINVRLEALSELLEDGRVDSHDTVFVQLATPSRERVQSYIEMREDIERQVGHINGEFGDVGHPIVHYLHRPIPRDELIAFFVAADVMLVTPLRDGMNLVAKEYVACRSDLGGALVLSEFTGAAAELRQAYLANPHHLEGVKDAIEAALNQDPEEGRRRMRALRRQVLAHDVDRWARAFLDALADTRAGAKPVRD.

Arginine 22 provides a ligand contact to D-glucose 6-phosphate. A UDP-alpha-D-glucose-binding site is contributed by 42–43 (GG). The D-glucose 6-phosphate site is built by tyrosine 94 and aspartate 148. Residues arginine 290 and lysine 295 each contribute to the UDP-alpha-D-glucose site. Arginine 328 is a binding site for D-glucose 6-phosphate. 393-397 (LVAKE) contributes to the UDP-alpha-D-glucose binding site.

It belongs to the glycosyltransferase 20 family. In terms of assembly, homotetramer.

The enzyme catalyses ADP-alpha-D-glucose + D-glucose 6-phosphate = alpha,alpha-trehalose 6-phosphate + ADP + H(+). It catalyses the reaction CDP-alpha-D-glucose + D-glucose 6-phosphate = alpha,alpha-trehalose 6-phosphate + CDP + H(+). It carries out the reaction GDP-alpha-D-glucose + D-glucose 6-phosphate = alpha,alpha-trehalose 6-phosphate + GDP + H(+). The catalysed reaction is TDP-alpha-D-glucose + D-glucose 6-phosphate = 5-methyl-UDP + alpha,alpha-trehalose 6-phosphate + H(+). The enzyme catalyses D-glucose 6-phosphate + UDP-alpha-D-glucose = alpha,alpha-trehalose 6-phosphate + UDP + H(+). It functions in the pathway glycan biosynthesis; trehalose biosynthesis. Its function is as follows. Probably involved in the osmoprotection via the biosynthesis of trehalose and in the production of glycogen and alpha-glucan via the TreS-Pep2 branch involved in the biosynthesis of maltose-1-phosphate (M1P). Catalyzes the transfer of glucose from UDP-glucose (UDP-Glc) to D-glucose 6-phosphate (Glc-6-P) to form trehalose-6-phosphate. Probably also able to use ADP-Glc, CDP-Glc, GDP-Glc and TDP-Glc as glucosyl donors. This is Trehalose-6-phosphate synthase from Mycobacterium sp. (strain KMS).